Here is a 446-residue protein sequence, read N- to C-terminus: MAKDLFGTDGIRGVAGQYPLDRDTVYAFGVALGKDAALHAAKPEILIGADTRESGTWIAELVAGGLASQGAQVRYAGVITTPGVAYLTRTGSFVAGVMISASHNPYDDNGLKVFGHSGFKLPDDEELLIEQEIFRLREAPVAPQPLSLTVEEPLVRQYLKYLSGISSVRLDGVRVAIDCGNGASYRLAPELFQGLGADVVTICCEPNGRNINLNCGALHLEALQQAVVAHRAHFGVAFDGDADRAIFVSSSGQVVNGDAVLLACGRALKAAGKLAGNTVVSTVMSNLGLERAFDAAGIRMVRTPVGDKYVLEEMVRLGAALGGEQSGHVIFREYSTTGDGMLTALRLFEIAQQAGTGLDELTADLKIYPQRLVNVRVREKKGLLELPAVAKEIRRVEDAFGGAGRVLVRFSGTEPLARVMVEGPNLEQVESFSTSIADVIRREMGE.

Residue S102 is the Phosphoserine intermediate of the active site. Mg(2+)-binding residues include S102, D239, D241, and D243. S102 carries the post-translational modification Phosphoserine.

Belongs to the phosphohexose mutase family. The cofactor is Mg(2+). Post-translationally, activated by phosphorylation.

It carries out the reaction alpha-D-glucosamine 1-phosphate = D-glucosamine 6-phosphate. Catalyzes the conversion of glucosamine-6-phosphate to glucosamine-1-phosphate. This is Phosphoglucosamine mutase from Solibacter usitatus (strain Ellin6076).